A 212-amino-acid chain; its full sequence is MSRYRGPRLKIIRRLNTPLPGLTSSPIVNSTVNTKSQRKDKSEYRIRLEEKQKLRFHYGITERQLLRYVRLARRAKGSTGQVLLQLLEMRLDNIIFRLGMAPTIPAARQLVNHGHVLVNERVVDIPSFRCKPQENISIRDRARSRALVDKNLNNSQESKKLSPSRDFLSKVPTHLRINTKNYKASVNQVVNRNSIGVKVNELLVVEYYSRQA.

The S4 RNA-binding domain maps to 89–152 (MRLDNIIFRL…RSRALVDKNL (64 aa)).

The protein belongs to the universal ribosomal protein uS4 family. In terms of assembly, part of the 30S ribosomal subunit. Contacts protein S5. The interaction surface between S4 and S5 is involved in control of translational fidelity.

The protein resides in the plastid. Its subcellular location is the chloroplast. One of the primary rRNA binding proteins, it binds directly to 16S rRNA where it nucleates assembly of the body of the 30S subunit. In terms of biological role, with S5 and S12 plays an important role in translational accuracy. This Staurastrum punctulatum (Green alga) protein is Small ribosomal subunit protein uS4c (rps4).